A 91-amino-acid chain; its full sequence is DNA-binding protein HRL53 (91 aa).

The interval A57–G91 is disordered.

It belongs to the bacterial histone-like protein family.

In terms of biological role, histone-like DNA-binding protein which is capable of wrapping DNA to stabilize it, and thus to prevent its denaturation under extreme environmental conditions. Binds to nod promoters and induces DNA binding. In Rhizobium leguminosarum, this protein is DNA-binding protein HRL53.